Here is a 417-residue protein sequence, read N- to C-terminus: Chaperone SurA (417 aa).

The N-terminal stretch at methionine 1 to alanine 12 is a signal peptide. 2 consecutive PpiC domains span residues serine 163 to glutamate 264 and arginine 273 to glycine 372.

It is found in the periplasm. The enzyme catalyses [protein]-peptidylproline (omega=180) = [protein]-peptidylproline (omega=0). Its function is as follows. Chaperone involved in the correct folding and assembly of outer membrane proteins. Recognizes specific patterns of aromatic residues and the orientation of their side chains, which are found more frequently in integral outer membrane proteins. May act in both early periplasmic and late outer membrane-associated steps of protein maturation. The sequence is that of Chaperone SurA from Pseudomonas aeruginosa (strain ATCC 15692 / DSM 22644 / CIP 104116 / JCM 14847 / LMG 12228 / 1C / PRS 101 / PAO1).